A 1972-amino-acid chain; its full sequence is MAQKGQLSDDEKFLFVDKNFMNSPMAQADWVAKKLVWVPSEKQGFEAASIKEEKGDEVVVELVENGKKVTVGKDDIQKMNPPKFSKVEDMAELTCLNEASVLHNLRERYFSGLIYTYSGLFCVVVNPYKYLPIYSEKIVDMYKGKKRHEMPPHIYAIADTAYRSMLQDREDQSILCTGESGAGKTENTQKVIQYLAVVASSHKGKKDSSITGELEKQLLQANPILEAFGNAKTVKNDNSSRFGKFIRINFDVTGYIVGANIETYLLEKSRAIRQARDERTFHIFYYLLAGAKEKMKSDLLLESFNSYTFLSNGFVPIPAAQDDEMFQETLEAMSIMGFNEEEQLAILKVVSSVLQLGNIVFKKERNTDQASMPDNTAAQKVCHLVGINVTDFTRAILTPRIKVGRDVVQKAQTKEQADFAIEALAKATYERLFRWILSRVNKALDKTHRQGASFLGILDIAGFEIFEVNSFEQLCINYTNEKLQQLFNHTMFILEQEEYQREGIEWNFIDFGLDLQPSIELIERPNNPPGVLALLDEECWFPKATDKSFVEKLCSEQGNHPKFQKPKQLKDKTEFSIIHYAGKVDYNASAWLTKNMDPLNDNVTSLLNASSDKFVADLWKDVDRIVGLDQMAKMTESSLPSASKTKKGMFRTVGQLYKEQLGKLMATLRNTTANFVRCIIPNHEKRSGKLDAFLVLEQLRCNGVLEGIRICRQGFPNRIVFQEFRQRYEILAANAIPKGFMDGKQACILMIKALELDPNLYRIGQSKIFFRTGVLAHLEEERDLKITDVIMAFQAMCRGYLARKAFTKRQQQLTAMKVIQRNCAAYLKLRNWQWWRLFTKVKPLLQVTRQEEEMQAKEEEMQKITERQQKAETELKELEQKHTQLAEEKTLLQEQLQAETELYAESEEMRVRLAAKKQELEEILHEMEARLEEEEDRRQQLQAERKKMAQQMLDLEEQLEEEEAARQKLQLEKVTAEAKIKKLEDDILVMDDQNSKLSKERKLLEERVSDLTTNLAEEEEKAKNLTKLKSKHESMISELEVRLKKEEKSRQELEKLKRKLEGDASDFHEQIADLQAQIAELKMQLAKKEEELQAALARLDEEIAQKNNALKKIRELEGHISDLQEDLDSERAARNKAEKQKRDLGEELEALKTELEDTLDSTATQQELRAKREQEVTVLKKALDEETRSHEAQVQEMRQKHTQAVEELTEQLEQFKRAKANLDKSKQTLEKENADLAGELRVLGQAKQEVEHKKKKLEVQLQDLQSKCSDGERARAELSDKVHKLQNEVESVTGMLNEAEGKAIKLAKDVASLGSQLQDTQELLQEETRQKLNVSTKLRQLEDERNSLQDQLDEEMEAKQNLERHVSTLNIQLSDSKKKLQDFASTIEVMEEGKKRLQKEMEGLSQQYEEKAAAYDKLEKTKNRLQQELDDLVVDLDNQRQLVSNLEKKQKKFDQLLAEEKNISSKYADERDRAEAEAREKETKALSLARALEEALEAKEELERTNKMLKAEMEDLVSSKDDVGKNVHELEKSKRALETQMEEMKTQLEESEDDVQATEDAKLRLEVNMQALKGQFERDLQARDEQNEEKRRQLQRQLHEYETELEDERKQRALAAAAKKKLEGDLKDLELQADSAIKGREEAIKQLRKLQAQMKDFQRELDDARASRDEIFATSKENEKKAKSLEADLMQLQEDLAAAERARKQADLEKEELAEELASSLSGRNTLQDEKRRLEARIAQLEEELEEEQGNMEAMSDRVRKATLQAEQLSNELATERSTAQKNESARQQLERQNKELRSKLQEVEGAVKAKLKSTVAALEAKIAQLEEQVEQEAREKQAATKSLKQKDKKLKEVLLQVEDERKMAEQYKEQAEKGNTKVKQLKRQLEEAEEESQCINANRRKLQRELDEATESNEAMGREVNALKSKLRRGNEASFVPSRRAGGRRVIENTDGSEEEMDARDSDFNGTKASE.

A phosphoserine mark is found at Ser-8, Ser-23, and Ser-40. In terms of domain architecture, Myosin N-terminal SH3-like spans 31 to 81 (VAKKLVWVPSEKQGFEAASIKEEKGDEVVVELVENGKKVTVGKDDIQKMNP). Residues 85-783 (SKVEDMAELT…VLAHLEEERD (699 aa)) enclose the Myosin motor domain. Lys-129 is subject to N6,N6,N6-trimethyllysine. Position 178–185 (178–185 (GESGAGKT)) interacts with ATP. 2 actin-binding regions span residues 661-683 (LGKL…IPNH) and 762-776 (RIGQ…GVLA). One can recognise an IQ domain in the interval 786-815 (ITDVIMAFQAMCRGYLARKAFTKRQQQLTA). Residues 844-1934 (LLQVTRQEEE…KSKLRRGNEA (1091 aa)) adopt a coiled-coil conformation. Thr-1177 bears the Phosphothreonine mark. Residues Ser-1684 and Ser-1722 each carry the phosphoserine modification. Over residues 1771-1788 (NELATERSTAQKNESARQ) the composition is skewed to polar residues. Disordered regions lie at residues 1771–1797 (NELA…NKEL) and 1867–1972 (QYKE…KASE). Basic and acidic residues predominate over residues 1867–1876 (QYKEQAEKGN). A C-terminal region spans residues 1935 to 1972 (SFVPSRRAGGRRVIENTDGSEEEMDARDSDFNGTKASE). The residue at position 1951 (Thr-1951) is a Phosphothreonine. Phosphoserine occurs at positions 1954 and 1971.

It belongs to the TRAFAC class myosin-kinesin ATPase superfamily. Myosin family. As to quaternary structure, muscle myosin is a hexameric protein that consists of 2 heavy chain subunits (MHC), 2 alkali light chain subunits (MLC) and 2 regulatory light chain subunits (MLC-2).

The protein resides in the melanosome. Its subcellular location is the cytoplasm. It is found in the myofibril. Muscle contraction. The chain is Myosin-11 (Myh11) from Mus musculus (Mouse).